Here is a 237-residue protein sequence, read N- to C-terminus: Ribose-5-phosphate isomerase A (237 aa).

Residues 30–33 (SGST), 87–90 (DGAD), and 100–103 (KGGG) contribute to the substrate site. Residue glutamate 109 is the Proton acceptor of the active site. Residue lysine 127 participates in substrate binding.

Belongs to the ribose 5-phosphate isomerase family. Homodimer.

The enzyme catalyses aldehydo-D-ribose 5-phosphate = D-ribulose 5-phosphate. Its pathway is carbohydrate degradation; pentose phosphate pathway; D-ribose 5-phosphate from D-ribulose 5-phosphate (non-oxidative stage): step 1/1. In terms of biological role, catalyzes the reversible conversion of ribose-5-phosphate to ribulose 5-phosphate. This Prochlorococcus marinus (strain SARG / CCMP1375 / SS120) protein is Ribose-5-phosphate isomerase A.